The sequence spans 91 residues: MEATLEQHLEDTMKNPSIVGVLCTDSQGLNLGCRGTLSDEHAGVISVLAQQAAKLTSDPTDIPVVCLESDNGNIMIQKHDGITVAVHKMAS.

Residue Met1 is modified to N-acetylmethionine.

Belongs to the LAMTOR5 family. Homodimer. Part of the Ragulator complex composed of LAMTOR1, LAMTOR2, LAMTOR3, LAMTOR4 and LAMTOR5. LAMTOR4 and LAMTOR5 form a heterodimer that interacts, through LAMTOR1, with a LAMTOR2, LAMTOR3 heterodimer. The Ragulator complex interacts with both the mTORC1 complex and heterodimers constituted of the Rag GTPases RagA/RRAGA, RagB/RRAGB, RagC/RRAGC and RagD/RRAGD; regulated by amino acid availability. The Ragulator complex interacts with SLC38A9; the probable amino acid sensor. Component of the lysosomal folliculin complex (LFC), composed of FLCN, FNIP1 (or FNIP2), RagA/RRAGA or RagB/RRAGB GDP-bound, RagC/RRAGC or RagD/RRAGD GTP-bound, and Ragulator. Interacts with phosphorylated BIRC5; the resulting complex binds pro-caspase-9, as well as active caspase-9, but much less efficiently. Interacts with SUPV3L1.

The protein localises to the lysosome. It is found in the cytoplasm. It localises to the cytosol. Its function is as follows. As part of the Ragulator complex it is involved in amino acid sensing and activation of mTORC1, a signaling complex promoting cell growth in response to growth factors, energy levels, and amino acids. Activated by amino acids through a mechanism involving the lysosomal V-ATPase, the Ragulator plays a dual role for the small GTPases Rag (RagA/RRAGA, RagB/RRAGB, RagC/RRAGC and/or RagD/RRAGD): it (1) acts as a guanine nucleotide exchange factor (GEF), activating the small GTPases Rag and (2) mediates recruitment of Rag GTPases to the lysosome membrane. Activated Ragulator and Rag GTPases function as a scaffold recruiting mTORC1 to lysosomes where it is in turn activated. When complexed to BIRC5, interferes with apoptosome assembly, preventing recruitment of pro-caspase-9 to oligomerized APAF1, thereby selectively suppressing apoptosis initiated via the mitochondrial/cytochrome c pathway. This is Ragulator complex protein LAMTOR5 (LAMTOR5) from Bos taurus (Bovine).